Consider the following 319-residue polypeptide: ATP-dependent 6-phosphofructokinase (319 aa).

G11 contributes to the ATP binding site. 21–25 provides a ligand contact to ADP; it reads RAVVR. ATP contacts are provided by residues 72–73 and 102–105; these read RY and GDGS. Position 103 (D103) interacts with Mg(2+). Substrate is bound at residue 125 to 127; the sequence is TID. D127 serves as the catalytic Proton acceptor. Residue R154 participates in ADP binding. Substrate-binding positions include R162 and 169-171; that span reads MGR. Residues 185 to 187, R211, and 213 to 215 each bind ADP; these read GAE and KKH. Residues E222, R243, and 249–252 contribute to the substrate site; that span reads HVQR.

This sequence belongs to the phosphofructokinase type A (PFKA) family. ATP-dependent PFK group I subfamily. Prokaryotic clade 'B1' sub-subfamily. As to quaternary structure, homotetramer. The cofactor is Mg(2+).

The protein localises to the cytoplasm. The enzyme catalyses beta-D-fructose 6-phosphate + ATP = beta-D-fructose 1,6-bisphosphate + ADP + H(+). It functions in the pathway carbohydrate degradation; glycolysis; D-glyceraldehyde 3-phosphate and glycerone phosphate from D-glucose: step 3/4. Allosterically activated by ADP and other diphosphonucleosides, and allosterically inhibited by phosphoenolpyruvate. In terms of biological role, catalyzes the phosphorylation of D-fructose 6-phosphate to fructose 1,6-bisphosphate by ATP, the first committing step of glycolysis. This is ATP-dependent 6-phosphofructokinase from Listeria monocytogenes serotype 4b (strain CLIP80459).